A 555-amino-acid polypeptide reads, in one-letter code: MTKFVFVTGGVVSSIGKGIVAASLGRLLKSRNYSVSILKLDPYINVDPGTMSPFQHGEVFVTDDGAETDLDLGHYERFTDTAMSRLNSVTTGSIYQSVLNKERRGDYEGGTVQVIPHITNEIKDRIKRVAKQATPDVLIIEIGGTVGDIESLPFLEAIRQFRKDVGRDNILYTHVTLMPWIPAAGEMKTKPTQHSVKELRSIGIQPDILVCRCDRPLSEGIKEKVSEFCDVPVEAVITSQDASSIYAVPLILEQEGLAQQVLKFMHLEQRRPDLTQWQALVHQLDHPSQTIEIALVGKYVQLSDAYLSVVESLQHAAVAQGIAVQIRWVNSEEIEAHGPDRYLADAAGIIVPGGFGIRGVDGKIAAIQYARDNQVPFLGLCLGMQCAVIEWARHIAGLEDANSAEFNPETRNPVINLLPEQQDVVDLGGTMRLGLYPCRLLPDTLASRLYPQETIVYERHRHRYEFNNAFRPLFLESGYVVSGTSPDGRLVEMIELPSHPFFIATQFHPEFRSRPNDPHPLFAGLVGACLADNGNNANHHDSTPAEPLVSEPLSS.

The amidoligase domain stretch occupies residues 1-267; it reads MTKFVFVTGG…AQQVLKFMHL (267 aa). Ser13 contacts CTP. A UTP-binding site is contributed by Ser13. ATP-binding positions include 14 to 19 and Asp71; that span reads SIGKGI. The Mg(2+) site is built by Asp71 and Glu141. Residues 148-150, 188-193, and Lys224 contribute to the CTP site; these read DIE and KTKPTQ. UTP-binding positions include 188 to 193 and Lys224; that span reads KTKPTQ. An ATP-binding site is contributed by Ala242. Residues 299 to 535 enclose the Glutamine amidotransferase type-1 domain; that stretch reads YVQLSDAYLS…VGACLADNGN (237 aa). Residue Gly354 participates in L-glutamine binding. Cys381 functions as the Nucleophile; for glutamine hydrolysis in the catalytic mechanism. Residues 382 to 385, Glu405, and Arg463 contribute to the L-glutamine site; that span reads LGMQ. Active-site residues include His508 and Glu510. Positions 536-555 are disordered; sequence NANHHDSTPAEPLVSEPLSS.

This sequence belongs to the CTP synthase family. In terms of assembly, homotetramer.

The enzyme catalyses UTP + L-glutamine + ATP + H2O = CTP + L-glutamate + ADP + phosphate + 2 H(+). It catalyses the reaction L-glutamine + H2O = L-glutamate + NH4(+). It carries out the reaction UTP + NH4(+) + ATP = CTP + ADP + phosphate + 2 H(+). It participates in pyrimidine metabolism; CTP biosynthesis via de novo pathway; CTP from UDP: step 2/2. With respect to regulation, allosterically activated by GTP, when glutamine is the substrate; GTP has no effect on the reaction when ammonia is the substrate. The allosteric effector GTP functions by stabilizing the protein conformation that binds the tetrahedral intermediate(s) formed during glutamine hydrolysis. Inhibited by the product CTP, via allosteric rather than competitive inhibition. Functionally, catalyzes the ATP-dependent amination of UTP to CTP with either L-glutamine or ammonia as the source of nitrogen. Regulates intracellular CTP levels through interactions with the four ribonucleotide triphosphates. This chain is CTP synthase, found in Acaryochloris marina (strain MBIC 11017).